The following is a 718-amino-acid chain: Kelch-like protein 4 (718 aa).

The segment at 46–69 (TPVQGRLKSHSRDRNGLKKSNSPV) is disordered. Positions 182–249 (CDVLLIAGHL…AYTGVLQLKE (68 aa)) constitute a BTB domain. Kelch repeat units follow at residues 430–476 (ALYA…VIDN), 477–523 (KLYV…TLEG), 525–570 (MYAV…ALNN), 571–617 (KLYA…TYNG), 619–670 (LYVV…PLGD), and 671–717 (KLYV…VVKL).

In terms of tissue distribution, expressed in adult fibroblasts and in a range of fetal tissues including tongue, palate, and mandible.

It is found in the cytoplasm. Its subcellular location is the cytoskeleton. The protein is Kelch-like protein 4 (KLHL4) of Homo sapiens (Human).